The following is a 471-amino-acid chain: Casein kinase 1-like protein 9 (471 aa).

Residues 9 to 278 form the Protein kinase domain; that stretch reads FKLGRKIGSG…LKRLFRDLFI (270 aa). ATP contacts are provided by residues 15-23 and Lys-38; that span reads IGSGSFGEL. Catalysis depends on Asp-128, which acts as the Proton acceptor. Residues 300-471 are disordered; sequence SSSGSSSRTR…RSLELLTLRK (172 aa). Over residues 325 to 339 the composition is skewed to basic and acidic residues; sequence EKQERIAGKETRENR. Residues 385 to 430 are compositionally biased toward low complexity; sequence SSRYGSSSRRAIPSSSRPSSAGGPSDSRSSSRLVTSTGGVGTVSNR. The span at 431–449 shows a compositional bias: polar residues; sequence ASTSQRIQAGNESRTSSFS. Over residues 454-464 the composition is skewed to basic and acidic residues; it reads NTREDPLRRSL.

It belongs to the protein kinase superfamily. CK1 Ser/Thr protein kinase family. Casein kinase I subfamily. In terms of assembly, monomer. Autophosphorylated on serine, threonine and tyrosine residues. Expressed in leaves, stems and flowers.

The protein localises to the cytoplasm. Its subcellular location is the nucleus. The catalysed reaction is L-seryl-[protein] + ATP = O-phospho-L-seryl-[protein] + ADP + H(+). The enzyme catalyses L-threonyl-[protein] + ATP = O-phospho-L-threonyl-[protein] + ADP + H(+). Casein kinases are operationally defined by their preferential utilization of acidic proteins such as caseins as substrates. Can phosphorylate casein on serine and threonine residues, and poly(Glu,Tyr) in vitro. In Arabidopsis thaliana (Mouse-ear cress), this protein is Casein kinase 1-like protein 9.